Here is a 105-residue protein sequence, read N- to C-terminus: Small ribosomal subunit protein uS17 (105 aa).

This sequence belongs to the universal ribosomal protein uS17 family. In terms of assembly, part of the 30S ribosomal subunit.

In terms of biological role, one of the primary rRNA binding proteins, it binds specifically to the 5'-end of 16S ribosomal RNA. The sequence is that of Small ribosomal subunit protein uS17 from Thermus aquaticus.